The chain runs to 192 residues: Fe/S biogenesis protein NfuA (192 aa).

[4Fe-4S] cluster-binding residues include Cys-149 and Cys-152.

This sequence belongs to the NfuA family. As to quaternary structure, homodimer. Requires [4Fe-4S] cluster as cofactor.

In terms of biological role, involved in iron-sulfur cluster biogenesis. Binds a 4Fe-4S cluster, can transfer this cluster to apoproteins, and thereby intervenes in the maturation of Fe/S proteins. Could also act as a scaffold/chaperone for damaged Fe/S proteins. This is Fe/S biogenesis protein NfuA from Alteromonas mediterranea (strain DSM 17117 / CIP 110805 / LMG 28347 / Deep ecotype).